The following is a 208-amino-acid chain: Uracil phosphoribosyltransferase (208 aa).

5-phospho-alpha-D-ribose 1-diphosphate-binding positions include arginine 78, arginine 103, and 130–138 (DPMLATGHS). Residues isoleucine 193 and 198–200 (GDA) each bind uracil. 5-phospho-alpha-D-ribose 1-diphosphate is bound at residue aspartate 199.

Belongs to the UPRTase family. The cofactor is Mg(2+).

The enzyme catalyses UMP + diphosphate = 5-phospho-alpha-D-ribose 1-diphosphate + uracil. Its pathway is pyrimidine metabolism; UMP biosynthesis via salvage pathway; UMP from uracil: step 1/1. With respect to regulation, allosterically activated by GTP. Catalyzes the conversion of uracil and 5-phospho-alpha-D-ribose 1-diphosphate (PRPP) to UMP and diphosphate. This Brucella anthropi (strain ATCC 49188 / DSM 6882 / CCUG 24695 / JCM 21032 / LMG 3331 / NBRC 15819 / NCTC 12168 / Alc 37) (Ochrobactrum anthropi) protein is Uracil phosphoribosyltransferase.